Here is a 247-residue protein sequence, read N- to C-terminus: uncharacterized protein (247 aa).

The region spanning 102–247 is the N-acetyltransferase domain; sequence RSIMSRTNDN…ISEHHYRIKR (146 aa).

Belongs to the acetyltransferase family.

This is an uncharacterized protein from Bacillus subtilis (strain 168).